Here is a 338-residue protein sequence, read N- to C-terminus: Aspartate carbamoyltransferase catalytic subunit (338 aa).

Residues R59 and T60 each contribute to the carbamoyl phosphate site. K87 is an L-aspartate binding site. The carbamoyl phosphate site is built by R109, H142, and Q145. R182 and R253 together coordinate L-aspartate. Carbamoyl phosphate is bound by residues G294 and P295.

It belongs to the aspartate/ornithine carbamoyltransferase superfamily. ATCase family. As to quaternary structure, heterododecamer (2C3:3R2) of six catalytic PyrB chains organized as two trimers (C3), and six regulatory PyrI chains organized as three dimers (R2).

It catalyses the reaction carbamoyl phosphate + L-aspartate = N-carbamoyl-L-aspartate + phosphate + H(+). It functions in the pathway pyrimidine metabolism; UMP biosynthesis via de novo pathway; (S)-dihydroorotate from bicarbonate: step 2/3. Its function is as follows. Catalyzes the condensation of carbamoyl phosphate and aspartate to form carbamoyl aspartate and inorganic phosphate, the committed step in the de novo pyrimidine nucleotide biosynthesis pathway. This chain is Aspartate carbamoyltransferase catalytic subunit, found in Prochlorococcus marinus (strain MIT 9515).